The following is a 456-amino-acid chain: tRNA-2-methylthio-N(6)-dimethylallyladenosine synthase (456 aa).

One can recognise an MTTase N-terminal domain in the interval M1–Q116. The [4Fe-4S] cluster site is built by C10, C46, C79, C162, C166, and C169. One can recognise a Radical SAM core domain in the interval S148–K384. In terms of domain architecture, TRAM spans R387–Q452.

This sequence belongs to the methylthiotransferase family. MiaB subfamily. As to quaternary structure, monomer. [4Fe-4S] cluster is required as a cofactor.

The protein localises to the cytoplasm. It carries out the reaction N(6)-dimethylallyladenosine(37) in tRNA + (sulfur carrier)-SH + AH2 + 2 S-adenosyl-L-methionine = 2-methylsulfanyl-N(6)-dimethylallyladenosine(37) in tRNA + (sulfur carrier)-H + 5'-deoxyadenosine + L-methionine + A + S-adenosyl-L-homocysteine + 2 H(+). In terms of biological role, catalyzes the methylthiolation of N6-(dimethylallyl)adenosine (i(6)A), leading to the formation of 2-methylthio-N6-(dimethylallyl)adenosine (ms(2)i(6)A) at position 37 in tRNAs that read codons beginning with uridine. This is tRNA-2-methylthio-N(6)-dimethylallyladenosine synthase from Treponema pallidum (strain Nichols).